The chain runs to 187 residues: NADH-quinone oxidoreductase subunit B (187 aa).

The span at 1–10 shows a compositional bias: basic and acidic residues; it reads MTADHNRALH. The interval 1-22 is disordered; sequence MTADHNRALHDAPTARGGEVRQ. The [4Fe-4S] cluster site is built by C66, C67, C131, and C161.

Belongs to the complex I 20 kDa subunit family. In terms of assembly, NDH-1 is composed of 14 different subunits. Subunits NuoB, C, D, E, F, and G constitute the peripheral sector of the complex. [4Fe-4S] cluster serves as cofactor.

The protein resides in the cell inner membrane. The catalysed reaction is a quinone + NADH + 5 H(+)(in) = a quinol + NAD(+) + 4 H(+)(out). NDH-1 shuttles electrons from NADH, via FMN and iron-sulfur (Fe-S) centers, to quinones in the respiratory chain. Couples the redox reaction to proton translocation (for every two electrons transferred, four hydrogen ions are translocated across the cytoplasmic membrane), and thus conserves the redox energy in a proton gradient. The polypeptide is NADH-quinone oxidoreductase subunit B (Erythrobacter litoralis (strain HTCC2594)).